The chain runs to 43 residues: Protein PsbN (43 aa).

A helical membrane pass occupies residues 4 to 24 (ATFVAIFISCLLISFTGYALY).

This sequence belongs to the PsbN family.

Its subcellular location is the plastid. It is found in the chloroplast thylakoid membrane. May play a role in photosystem I and II biogenesis. This is Protein PsbN from Marchantia polymorpha (Common liverwort).